A 336-amino-acid chain; its full sequence is Glycerol-3-phosphate dehydrogenase [NAD(P)+] (336 aa).

NADPH is bound by residues Ser-14, Trp-15, Arg-35, Arg-36, and Lys-109. 2 residues coordinate sn-glycerol 3-phosphate: Lys-109 and Gly-139. Ala-143 is a binding site for NADPH. Residues Lys-194, Asp-247, Ser-257, Arg-258, and Asn-259 each contribute to the sn-glycerol 3-phosphate site. The Proton acceptor role is filled by Lys-194. Arg-258 serves as a coordination point for NADPH. NADPH is bound at residue Glu-284.

Belongs to the NAD-dependent glycerol-3-phosphate dehydrogenase family.

The protein resides in the cytoplasm. It carries out the reaction sn-glycerol 3-phosphate + NAD(+) = dihydroxyacetone phosphate + NADH + H(+). The enzyme catalyses sn-glycerol 3-phosphate + NADP(+) = dihydroxyacetone phosphate + NADPH + H(+). Its pathway is membrane lipid metabolism; glycerophospholipid metabolism. In terms of biological role, catalyzes the reduction of the glycolytic intermediate dihydroxyacetone phosphate (DHAP) to sn-glycerol 3-phosphate (G3P), the key precursor for phospholipid synthesis. This Streptomyces avermitilis (strain ATCC 31267 / DSM 46492 / JCM 5070 / NBRC 14893 / NCIMB 12804 / NRRL 8165 / MA-4680) protein is Glycerol-3-phosphate dehydrogenase [NAD(P)+].